The following is a 959-amino-acid chain: E3 ubiquitin-protein ligase NEDD4-like (959 aa).

Residues Pro10–Tyr130 enclose the C2 domain. Disordered regions lie at residues Ser183–Lys206, Ala248–Glu275, and Asp289–Ser316. Residues Pro197 to Leu230 enclose the WW 1 domain. Phosphoserine is present on Ser316. Thr322 is subject to Phosphothreonine. Ser346 bears the Phosphoserine; by WNK1 and WNK4 mark. Positions Pro369 to Met402 constitute a WW 2 domain. Residues Gly408–Val478 are disordered. Ser430 bears the Phosphoserine mark. Residue Ser432 is modified to Phosphoserine; by SGK1. Ser433 carries the phosphoserine; by WNK1 and WNK4 modification. Residues Gly444–Lys455 show a composition bias toward basic and acidic residues. Ser448 is modified (phosphoserine; by SGK1). Ser459, Ser463, Ser467, and Ser471 each carry phosphoserine. 2 consecutive WW domains span residues Ser481–Leu514 and Gly532–Leu565. The HECT domain maps to Arg624 to Val958. The active-site Glycyl thioester intermediate is Cys926.

Interacts with UBE2E3. Interacts with NDFIP1; this interaction activates the E3 ubiquitin-protein ligase. Interacts with NDFIP2; this interaction activates the E3 ubiquitin-protein ligase. Interacts (via WW domains) with SCN1A. Interacts (via WW domains) with SCN2A. Interacts (via WW domains) with SCN3A. Interacts (via WW domains) with SCN5A. Interacts (via WW domains) with SCN8A. Interacts (via WW domains) with SCN9A. Interacts (via WW domains) with SCN10A. Interacts (via WW domains) with CLCN5. Interacts with SMAD2. Interacts with SMAD3. Interacts with SMAD6. Interacts with SMAD7. The phosphorylated form interacts with 14-3-3 proteins. Interacts with TNK2. Interacts with WNK1. Interacts with SGK1. Interacts (via C2 domain) with NPC2. Interacts with ARRDC4. Interacts with KCNQ1; promotes internalization of KCNQ1. Interacts (via domains WW1, 3 and 4) with USP36; the interaction inhibits ubiquitination of, at least, NTRK1, KCNQ2 and KCNQ3 by NEDD4L. Interacts with PRRG4 (via cytoplasmic domain). Interacts with LDLRAD3; the interaction is direct. Interacts with TTYH2 and TTYH3. In terms of processing, phosphorylated; which impairs interaction with SCNN. Interaction with YWHAH inhibits dephosphorylation. Post-translationally, auto-ubiquitinated.

The protein resides in the cytoplasm. The protein localises to the golgi apparatus. Its subcellular location is the endosome. It localises to the multivesicular body. The catalysed reaction is S-ubiquitinyl-[E2 ubiquitin-conjugating enzyme]-L-cysteine + [acceptor protein]-L-lysine = [E2 ubiquitin-conjugating enzyme]-L-cysteine + N(6)-ubiquitinyl-[acceptor protein]-L-lysine.. It participates in protein modification; protein ubiquitination. Its activity is regulated as follows. Activated by NDFIP1- and NDFIP2-binding. Functionally, E3 ubiquitin-protein ligase which accepts ubiquitin from an E2 ubiquitin-conjugating enzyme in the form of a thioester and then directly transfers the ubiquitin to targeted substrates. Inhibits TGF-beta signaling by triggering SMAD2 and TGFBR1 ubiquitination and proteasome-dependent degradation. Promotes ubiquitination and internalization of various plasma membrane channels such as ENaC, Nav1.2, Nav1.3, Nav1.5, Nav1.7, Nav1.8, Kv1.3, KCNH2, EAAT1 or CLC5. Promotes ubiquitination and degradation of SGK1 and TNK2. Ubiquitinates BRAT1 and this ubiquitination is enhanced in the presence of NDFIP1. Plays a role in dendrite formation by melanocytes. Involved in the regulation of TOR signaling. Ubiquitinates TTYH2 and TTYH3 and regulates protein levels of TTYH2. The sequence is that of E3 ubiquitin-protein ligase NEDD4-like (NEDD4L) from Pongo abelii (Sumatran orangutan).